The following is a 356-amino-acid chain: Malate dehydrogenase, glyoxysomal (356 aa).

The transit peptide at 1–36 (MEDAAAAARRMERLASHLRPPASQMEESPLLRGSNC) directs the protein to the glyoxysome. NAD(+) contacts are provided by residues 51–57 (GASGGIG) and aspartate 77. The substrate site is built by arginine 124 and arginine 130. NAD(+) contacts are provided by residues asparagine 137 and 160 to 162 (ISN). 2 residues coordinate substrate: asparagine 162 and arginine 196. Histidine 220 functions as the Proton acceptor in the catalytic mechanism. Methionine 271 contributes to the NAD(+) binding site.

Belongs to the LDH/MDH superfamily. MDH type 1 family. Homodimer.

It localises to the glyoxysome. The enzyme catalyses (S)-malate + NAD(+) = oxaloacetate + NADH + H(+). In Oryza sativa subsp. japonica (Rice), this protein is Malate dehydrogenase, glyoxysomal.